Reading from the N-terminus, the 203-residue chain is Ras-related protein Rab-7L1 (203 aa).

Positions 33, 34, 35, 36, 37, and 39 each coordinate GTP. The Effector region signature appears at 36–44; it reads YKSTVGVDF. The residue at position 71 (T71) is a Phosphothreonine; by LRRK2. S72 carries the phosphoserine; by LRRK2 modification. Positions 126, 156, and 157 each coordinate GTP. Residues C202 and C203 are each lipidated (S-geranylgeranyl cysteine).

The protein belongs to the small GTPase superfamily. Rab family. As to quaternary structure, interacts with LRRK2 (via the N-terminus); this interaction is direct and stimulates kinase activity. In case of Salmonella enterica serovar Typhimurium (S.typhimurium) infection, is proteolytically cleaved between Gly-41 and Val-42 by the GtgE viral protease encoded on the Gifsy-2 lysogen bacteriophage, which therefore prevents the recruitment of RAB29 to S.typhimurium-containing vacuoles. In contrast, no proteolytically cleavage is detected in S.typhi-infected cells. As to expression, ubiquitous.

The protein resides in the cell membrane. The protein localises to the cytoplasm. It localises to the perinuclear region. Its subcellular location is the golgi apparatus. It is found in the golgi apparatus membrane. The protein resides in the trans-Golgi network. The protein localises to the vacuole. It localises to the cytoskeleton. Its function is as follows. The small GTPases Rab are key regulators in vesicle trafficking. Essential for maintaining the integrity of the endosome-trans-Golgi network structure. Together with LRRK2, plays a role in the retrograde trafficking pathway for recycling proteins, such as mannose 6 phosphate receptor (M6PR), between lysosomes and the Golgi apparatus in a retromer-dependent manner. Recruits LRRK2 to the Golgi complex and stimulates LRRK2 kinase activity. Stimulates phosphorylation of RAB10 'Thr-73' by LRRK2. Regulates neuronal process morphology in the intact central nervous system (CNS). May play a role in the formation of typhoid toxin transport intermediates during Salmonella enterica serovar Typhi (S.typhi) epithelial cell infection. This Homo sapiens (Human) protein is Ras-related protein Rab-7L1 (RAB29).